Here is a 318-residue protein sequence, read N- to C-terminus: Phosphatidylglycerol--prolipoprotein diacylglyceryl transferase (318 aa).

The next 7 helical transmembrane spans lie at 23–43 (PLTI…GAWL), 59–79 (MDII…YHVI), 98–118 (IWEG…GAAI), 124–146 (GVRL…AMGR), 192–212 (FQPT…LLVF), 219–239 (LGAG…RFIF), and 253–273 (LRVN…VFLI). Arg-146 is an a 1,2-diacyl-sn-glycero-3-phospho-(1'-sn-glycerol) binding site. A compositionally biased stretch (basic and acidic residues) spans 293–312 (FDTRANGHDPEKHDETDGKG). The tract at residues 293–318 (FDTRANGHDPEKHDETDGKGNRHHVP) is disordered.

This sequence belongs to the Lgt family.

Its subcellular location is the cell membrane. The catalysed reaction is L-cysteinyl-[prolipoprotein] + a 1,2-diacyl-sn-glycero-3-phospho-(1'-sn-glycerol) = an S-1,2-diacyl-sn-glyceryl-L-cysteinyl-[prolipoprotein] + sn-glycerol 1-phosphate + H(+). It participates in protein modification; lipoprotein biosynthesis (diacylglyceryl transfer). Its function is as follows. Catalyzes the transfer of the diacylglyceryl group from phosphatidylglycerol to the sulfhydryl group of the N-terminal cysteine of a prolipoprotein, the first step in the formation of mature lipoproteins. This Paenarthrobacter aurescens (strain TC1) protein is Phosphatidylglycerol--prolipoprotein diacylglyceryl transferase.